We begin with the raw amino-acid sequence, 447 residues long: Pyruvate kinase (447 aa).

Arginine 33 is a substrate binding site. Residues asparagine 35, serine 37, and aspartate 61 each coordinate K(+). 35-38 (NMSH) serves as a coordination point for ATP. Residue arginine 68 participates in ATP binding. Glutamate 203 provides a ligand contact to Mg(2+). Residues glycine 226, aspartate 227, and threonine 259 each contribute to the substrate site. Position 227 (aspartate 227) interacts with Mg(2+).

The protein belongs to the pyruvate kinase family. As to quaternary structure, homotetramer. Mg(2+) serves as cofactor. Requires K(+) as cofactor.

The enzyme catalyses pyruvate + ATP = phosphoenolpyruvate + ADP + H(+). It participates in carbohydrate degradation; glycolysis; pyruvate from D-glyceraldehyde 3-phosphate: step 5/5. The sequence is that of Pyruvate kinase from Methanocaldococcus jannaschii (strain ATCC 43067 / DSM 2661 / JAL-1 / JCM 10045 / NBRC 100440) (Methanococcus jannaschii).